Reading from the N-terminus, the 149-residue chain is Cytochrome c-type biogenesis protein CcmE (149 aa).

At 1-7 (MTRKQKR) the chain is on the cytoplasmic side. Residues 8 to 28 (LAVIAGGMGFIATAVLLVLFA) form a helical; Signal-anchor for type II membrane protein membrane-spanning segment. Residues 29–149 (FSQSVAYFYM…GVWKGEEASQ (121 aa)) lie on the Periplasmic side of the membrane. Positions 123 and 127 each coordinate heme.

Belongs to the CcmE/CycJ family.

It is found in the cell inner membrane. Functionally, heme chaperone required for the biogenesis of c-type cytochromes. Transiently binds heme delivered by CcmC and transfers the heme to apo-cytochromes in a process facilitated by CcmF and CcmH. In Rhizobium rhizogenes (strain K84 / ATCC BAA-868) (Agrobacterium radiobacter), this protein is Cytochrome c-type biogenesis protein CcmE.